We begin with the raw amino-acid sequence, 220 residues long: Cysteine-rich venom protein (220 aa).

One can recognise an SCP domain in the interval 20 to 147 (DLHNSLRRSV…AYKYFYVCQY (128 aa)). 8 cysteine pairs are disulfide-bonded: Cys-56–Cys-134, Cys-73–Cys-148, Cys-129–Cys-145, Cys-167–Cys-174, Cys-170–Cys-179, Cys-183–Cys-215, Cys-192–Cys-209, and Cys-200–Cys-213. The ShKT domain maps to 183-215 (CTREDEFINCNDLVKQGCQTDYLKSNCAASCFC).

Expressed by the venom gland.

It is found in the secreted. In terms of biological role, blocks contraction of smooth muscle elicited by high potassium-induced depolarization, but does not block caffeine-stimulated contraction. May target voltage-gated calcium channels in smooth muscle. The chain is Cysteine-rich venom protein from Echis coloratus (Carpet viper).